The primary structure comprises 475 residues: Adenosylhomocysteinase (475 aa).

Positions 66, 141, and 201 each coordinate substrate. 202–204 contributes to the NAD(+) binding site; that stretch reads TTT. K231 and D235 together coordinate substrate. NAD(+) is bound by residues N236, 265 to 270, E288, N323, 344 to 346, and N389; these read GYGEVG and IGH.

This sequence belongs to the adenosylhomocysteinase family. NAD(+) is required as a cofactor.

It localises to the cytoplasm. The enzyme catalyses S-adenosyl-L-homocysteine + H2O = L-homocysteine + adenosine. Its pathway is amino-acid biosynthesis; L-homocysteine biosynthesis; L-homocysteine from S-adenosyl-L-homocysteine: step 1/1. Its function is as follows. May play a key role in the regulation of the intracellular concentration of adenosylhomocysteine. This Geobacter sulfurreducens (strain ATCC 51573 / DSM 12127 / PCA) protein is Adenosylhomocysteinase.